The sequence spans 340 residues: Ketol-acid reductoisomerase (NADP(+)) (340 aa).

The region spanning 3-183 is the KARI N-terminal Rossmann domain; it reads INVYYDKDCD…GGGRTGIIET (181 aa). Residues 26–29, Ser54, and 84–87 contribute to the NADP(+) site; these read FGSQ and DELQ. Residue His109 is part of the active site. Gly135 is an NADP(+) binding site. The KARI C-terminal knotted domain maps to 184 to 329; that stretch reads TFKDETETDL…KKLRAMMPWI (146 aa). Asp192, Glu196, Glu228, and Glu232 together coordinate Mg(2+). Ser253 serves as a coordination point for substrate.

This sequence belongs to the ketol-acid reductoisomerase family. It depends on Mg(2+) as a cofactor.

It catalyses the reaction (2R)-2,3-dihydroxy-3-methylbutanoate + NADP(+) = (2S)-2-acetolactate + NADPH + H(+). It carries out the reaction (2R,3R)-2,3-dihydroxy-3-methylpentanoate + NADP(+) = (S)-2-ethyl-2-hydroxy-3-oxobutanoate + NADPH + H(+). It participates in amino-acid biosynthesis; L-isoleucine biosynthesis; L-isoleucine from 2-oxobutanoate: step 2/4. It functions in the pathway amino-acid biosynthesis; L-valine biosynthesis; L-valine from pyruvate: step 2/4. Involved in the biosynthesis of branched-chain amino acids (BCAA). Catalyzes an alkyl-migration followed by a ketol-acid reduction of (S)-2-acetolactate (S2AL) to yield (R)-2,3-dihydroxy-isovalerate. In the isomerase reaction, S2AL is rearranged via a Mg-dependent methyl migration to produce 3-hydroxy-3-methyl-2-ketobutyrate (HMKB). In the reductase reaction, this 2-ketoacid undergoes a metal-dependent reduction by NADPH to yield (R)-2,3-dihydroxy-isovalerate. This chain is Ketol-acid reductoisomerase (NADP(+)), found in Campylobacter concisus (strain 13826).